Consider the following 83-residue polypeptide: Protein YqgD (83 aa).

This sequence belongs to the YqgD family.

The polypeptide is Protein YqgD (yqgD) (Escherichia coli (strain K12)).